A 529-amino-acid chain; its full sequence is Delayed-rectifier potassium channel regulatory subunit KCNS1 (529 aa).

Residues 1–217 (MLMLLVRGTH…LTMENPGYSL (217 aa)) are Cytoplasmic-facing. The chain crosses the membrane as a helical span at residues 218–239 (PSKLFSCVSISVVLASIAAMCI). The Extracellular portion of the chain corresponds to 240–270 (HSLPEYQAREAAAAVAAVAAGRSPEGVRDDP). A helical membrane pass occupies residues 271-293 (VLRRLEYFCIAWFSFEVSSRLLL). Topologically, residues 294 to 304 (APSTRNFFCHP) are cytoplasmic. A helical transmembrane segment spans residues 305-322 (LNLIDIVSVLPFYLTLLA). At 323–340 (GVALGDQGGTGGKELGHL) the chain is on the extracellular side. A helical; Voltage-sensor transmembrane segment spans residues 341–361 (GKVVQVFRLMRIFRVLKLARH). Over 362–376 (STGLRSLGATLKHSY) the chain is Cytoplasmic. Residues 377 to 398 (REVGILLLYLAVGVSVFSGVAY) form a helical membrane-spanning segment. Over 399 to 411 (TAEKEEDVGFNTI) the chain is Extracellular. Positions 412-423 (PACWWWGTVSMT) form an intramembrane region, helical. Residues 424–429 (TVGYGD) carry the Selectivity filter motif. Residues 424 to 431 (TVGYGDVV) lie within the membrane without spanning it. Residues 432 to 438 (PVTVAGK) are Extracellular-facing. A helical transmembrane segment spans residues 439-467 (LAASGCILGGILVVALPITIIFNKFSHFY). Residues 468-529 (RRQKALEAAV…PSEPPHPQMY (62 aa)) lie on the Cytoplasmic side of the membrane. Residues 496–529 (SEASLETSRETSQEGRSADLETQAPSEPPHPQMY) form a disordered region. A compositionally biased stretch (basic and acidic residues) spans 502–514 (TSRETSQEGRSAD).

This sequence belongs to the potassium channel family. S (TC 1.A.1.2) subfamily. Kv9.1/KCNS1 sub-subfamily. As to quaternary structure, heterotetramer with KCNB1. Heterotetramer with KCNB2. Does not form homomultimers.

Its subcellular location is the cell membrane. In terms of biological role, potassium channel regulatory subunit that modulate the delayed rectifier voltage-gated potassium channel activity of KCNB1 and KCNB2 by altering their kinetics, expression levels, and shifting the half-inactivation potential to more polarized values. While it does not form functional channels on its own, it can form functional heterotetrameric channels with KCNB1 and KCNB2. Each regulatory subunit has unique regulatory properties that can lead to extensive inhibition, significant changes in kinetics, and/or substantial shifts in the voltage dependencies of the inactivation process. This is Delayed-rectifier potassium channel regulatory subunit KCNS1 from Papio anubis (Olive baboon).